We begin with the raw amino-acid sequence, 259 residues long: NAD kinase (259 aa).

The Proton acceptor role is filled by D49. NAD(+)-binding positions include 49–50 (DG), R54, 118–119 (NE), D148, A156, 159–164 (TAYNYS), and A183.

Belongs to the NAD kinase family. A divalent metal cation is required as a cofactor.

It localises to the cytoplasm. The enzyme catalyses NAD(+) + ATP = ADP + NADP(+) + H(+). Its function is as follows. Involved in the regulation of the intracellular balance of NAD and NADP, and is a key enzyme in the biosynthesis of NADP. Catalyzes specifically the phosphorylation on 2'-hydroxyl of the adenosine moiety of NAD to yield NADP. In Xylella fastidiosa (strain Temecula1 / ATCC 700964), this protein is NAD kinase.